We begin with the raw amino-acid sequence, 389 residues long: PqqA peptide cyclase (389 aa).

The Radical SAM core domain occupies 19–234 (VGLPLWLLAE…TNEYRDQLAA (216 aa)). [4Fe-4S] cluster-binding residues include Cys33, Cys37, and Cys40.

It belongs to the radical SAM superfamily. PqqE family. As to quaternary structure, interacts with PqqD. The interaction is necessary for activity of PqqE. Requires [4Fe-4S] cluster as cofactor.

It catalyses the reaction [PQQ precursor protein] + S-adenosyl-L-methionine = E-Y cross-linked-[PQQ precursor protein] + 5'-deoxyadenosine + L-methionine + H(+). Its pathway is cofactor biosynthesis; pyrroloquinoline quinone biosynthesis. Catalyzes the cross-linking of a glutamate residue and a tyrosine residue in the PqqA protein as part of the biosynthesis of pyrroloquinoline quinone (PQQ). The protein is PqqA peptide cyclase of Pseudomonas syringae pv. tomato (strain ATCC BAA-871 / DC3000).